The following is a 179-amino-acid chain: Cell division protein SepF (179 aa).

The interval 22–53 is disordered; that stretch reads LPYEKRDEPVFTPVNSSQEPALPMNQPSQSVG. The segment covering 34–53 has biased composition (polar residues); it reads PVNSSQEPALPMNQPSQSVG.

It belongs to the SepF family. In terms of assembly, homodimer. Interacts with FtsZ.

The protein resides in the cytoplasm. In terms of biological role, cell division protein that is part of the divisome complex and is recruited early to the Z-ring. Probably stimulates Z-ring formation, perhaps through the cross-linking of FtsZ protofilaments. Its function overlaps with FtsA. The sequence is that of Cell division protein SepF from Streptococcus pneumoniae (strain P1031).